Here is a 37-residue protein sequence, read N- to C-terminus: Dolichyl-diphosphooligosaccharide--protein glycosyltransferase subunit 4 (37 aa).

The Lumenal portion of the chain corresponds to 1–4 (MITD). Residues 5–25 (VQLAIFANMLGVSLFLLVVLY) traverse the membrane as a helical segment. Residues 26-37 (HYVAVNNPKKQE) are Cytoplasmic-facing.

It belongs to the OST4 family. As to quaternary structure, component of the oligosaccharyltransferase (OST) complex. OST exists in two different complex forms which contain common core subunits RPN1, RPN2, OST48, OST4, DAD1 and TMEM258, either STT3A or STT3B as catalytic subunits, and form-specific accessory subunits. STT3A complex assembly occurs through the formation of 3 subcomplexes. Subcomplex 1 contains RPN1 and TMEM258, subcomplex 2 contains the STT3A-specific subunits STT3A, DC2/OSTC, and KCP2 as well as the core subunit OST4, and subcomplex 3 contains RPN2, DAD1, and OST48. The STT3A complex can form stable complexes with the Sec61 complex or with both the Sec61 and TRAP complexes.

Its subcellular location is the endoplasmic reticulum. The protein resides in the endoplasmic reticulum membrane. It functions in the pathway protein modification; protein glycosylation. Functionally, subunit of the oligosaccharyl transferase (OST) complex that catalyzes the initial transfer of a defined glycan (Glc(3)Man(9)GlcNAc(2) in eukaryotes) from the lipid carrier dolichol-pyrophosphate to an asparagine residue within an Asn-X-Ser/Thr consensus motif in nascent polypeptide chains, the first step in protein N-glycosylation. N-glycosylation occurs cotranslationally and the complex associates with the Sec61 complex at the channel-forming translocon complex that mediates protein translocation across the endoplasmic reticulum (ER). All subunits are required for a maximal enzyme activity. Specifically involved in maintaining stability of STT3A-containing OST complexes. In Homo sapiens (Human), this protein is Dolichyl-diphosphooligosaccharide--protein glycosyltransferase subunit 4.